A 319-amino-acid polypeptide reads, in one-letter code: Aspartate carbamoyltransferase catalytic subunit (319 aa).

2 residues coordinate carbamoyl phosphate: R57 and T58. K85 lines the L-aspartate pocket. Positions 107, 140, and 143 each coordinate carbamoyl phosphate. L-aspartate-binding residues include R173 and R227. The carbamoyl phosphate site is built by G268 and P269.

The protein belongs to the aspartate/ornithine carbamoyltransferase superfamily. ATCase family. Heterododecamer (2C3:3R2) of six catalytic PyrB chains organized as two trimers (C3), and six regulatory PyrI chains organized as three dimers (R2).

It catalyses the reaction carbamoyl phosphate + L-aspartate = N-carbamoyl-L-aspartate + phosphate + H(+). The protein operates within pyrimidine metabolism; UMP biosynthesis via de novo pathway; (S)-dihydroorotate from bicarbonate: step 2/3. Catalyzes the condensation of carbamoyl phosphate and aspartate to form carbamoyl aspartate and inorganic phosphate, the committed step in the de novo pyrimidine nucleotide biosynthesis pathway. The protein is Aspartate carbamoyltransferase catalytic subunit of Mycobacterium tuberculosis (strain ATCC 25177 / H37Ra).